Here is a 902-residue protein sequence, read N- to C-terminus: MSQSSKARLSTDPTVFEAVLNNHTPMMQQYLRIKAQHPDMLMFYRMGDFYELFFDDAEKAAKLLDITLTRRGTSAGEPIKMAGVPYHAAEQYLAKLVKLGESVVICEQVGDPATSKGPVERQVTRIITPGTLTDAALLEDKRDSALLALLVHESTLGLAWLNLAAGQFSVMETSVNNLTAELERLKPAEILLPESLNLAGINDRVIQEKLCVKHLPAWQFDTAAAVRNLSRQFGTHDLSGFGCEDLDVSLGAASALLDYTRLTQGASIGHIKGLRVEREDTYLRMDATTRRNLEISETIRGDAAPTLLSLLDTCSTNMGSRLLCHWLHHPLRDRGLIQNRLNGVSFLMGEAGSGPCLSVRDCLKRVTDIERITARIALKSARPRDLSGLRDSLKRLPAVNNAVAGTATTSSGGSDVSAHVAALIHSMAPDNALVALLEKSLKEEPEVMLRTGGVIADGYDAELDELRAIHNNCDEFLLQLETREKARTGIANLKVEYNRLHGFYIEVTHAHTEKIPDDYRRRQTLKNAERYITPELKAFEEKALSAQSRALEREKLLYGELLDMLSQYIDHLQQVARSVAELDVLATFAERALALDYSLPLFTSDSVIEIQAGRHPVVEKQVDSFIANDVQLGARTGGRRQMLVITGPNMGGKSTYMRQVALIALLAHCGSFVPARSALIGPLDQLFTRIGASDDLAGGRSTFMMEMTEAANILHNATAQSLVLMDEVGRGTSTFDGLALAFAIARYLLEKNRSYTLFATHYFELTRLAEEFAQVANVHLRAVEHKHHIVFLHAVNEGPASQSYGLQVAALAGVPDPVIRTARRYLLKLEQEALSNQPQGDLFSRDDLFWKQDRMPEGSVDKNDSAPEHPVLALLRTIVPDDLSPKQALEQLYGLKKAAEKE.

647–654 is an ATP binding site; that stretch reads GPNMGGKS.

It belongs to the DNA mismatch repair MutS family.

This protein is involved in the repair of mismatches in DNA. It is possible that it carries out the mismatch recognition step. This protein has a weak ATPase activity. The protein is DNA mismatch repair protein MutS of Nitrosospira multiformis (strain ATCC 25196 / NCIMB 11849 / C 71).